The primary structure comprises 248 residues: 14-3-3-like protein 2 (248 aa).

It belongs to the 14-3-3 family. Interacts with daf-16. Interacts with sir-2.1. Interacts with hcf-1.

The protein resides in the cytoplasm. Its subcellular location is the nucleus. In terms of biological role, required for extension of lifespan by sir-2.1. Required to modulate lifespan, in concert with hcf-1, acting redundantly with 14-3-3-like protein par-5. Promotes nuclear export of yap-1. Negatively regulates the transcriptional activity of daf-16 by sequestering it to the cytoplasm. This chain is 14-3-3-like protein 2, found in Caenorhabditis elegans.